We begin with the raw amino-acid sequence, 204 residues long: Methylthioribulose-1-phosphate dehydratase (204 aa).

Residues His-94 and His-96 each coordinate Zn(2+).

Belongs to the aldolase class II family. MtnB subfamily. Zn(2+) serves as cofactor.

The enzyme catalyses 5-(methylsulfanyl)-D-ribulose 1-phosphate = 5-methylsulfanyl-2,3-dioxopentyl phosphate + H2O. It functions in the pathway amino-acid biosynthesis; L-methionine biosynthesis via salvage pathway; L-methionine from S-methyl-5-thio-alpha-D-ribose 1-phosphate: step 2/6. In terms of biological role, catalyzes the dehydration of methylthioribulose-1-phosphate (MTRu-1-P) into 2,3-diketo-5-methylthiopentyl-1-phosphate (DK-MTP-1-P). The sequence is that of Methylthioribulose-1-phosphate dehydratase from Serratia proteamaculans (strain 568).